The primary structure comprises 229 residues: Secretory carrier-associated membrane protein 4 (229 aa).

The Cytoplasmic portion of the chain corresponds to 1–39 (MSEKENNFPPLPKFIPVKPCFYQNFSDEIPVEHQVLVKR). 4 consecutive transmembrane segments (helical) span residues 40-60 (IYRL…ACLA), 61-81 (WWIG…LLLF), 105-125 (FMAF…QAIG), and 149-169 (VVML…AIAI). Topologically, residues 170 to 229 (MKVHRIYRGAGGSFQKAQTEWNTGTWRNPPSREAQYNNFSGNSLPEYPTVPSYPGSGQWP) are cytoplasmic. Residue Thr-194 is modified to Phosphothreonine. A disordered region spans residues 208-229 (FSGNSLPEYPTVPSYPGSGQWP).

This sequence belongs to the SCAMP family.

The protein resides in the membrane. In terms of biological role, probably involved in membrane protein trafficking. This chain is Secretory carrier-associated membrane protein 4 (SCAMP4), found in Pongo abelii (Sumatran orangutan).